The primary structure comprises 454 residues: Guanine deaminase (454 aa).

Positions 82 and 84 each coordinate Zn(2+). Substrate is bound by residues 84–87 (HAPQ), 213–214 (RF), 240–243 (HISE), and D330. H240 and D330 together coordinate Zn(2+). The residue at position 453 (S453) is a Phosphoserine.

Belongs to the metallo-dependent hydrolases superfamily. ATZ/TRZ family. Homodimer. Zn(2+) serves as cofactor.

It carries out the reaction guanine + H2O + H(+) = xanthine + NH4(+). It participates in purine metabolism; guanine degradation; xanthine from guanine: step 1/1. Its function is as follows. Catalyzes the hydrolytic deamination of guanine, producing xanthine and ammonia. This chain is Guanine deaminase (Gda), found in Rattus norvegicus (Rat).